The following is a 487-amino-acid chain: Glutamyl-tRNA(Gln) amidotransferase subunit A (487 aa).

Residues lysine 80 and serine 155 each act as charge relay system in the active site. Serine 179 functions as the Acyl-ester intermediate in the catalytic mechanism.

The protein belongs to the amidase family. GatA subfamily. In terms of assembly, heterotrimer of A, B and C subunits.

The catalysed reaction is L-glutamyl-tRNA(Gln) + L-glutamine + ATP + H2O = L-glutaminyl-tRNA(Gln) + L-glutamate + ADP + phosphate + H(+). Functionally, allows the formation of correctly charged Gln-tRNA(Gln) through the transamidation of misacylated Glu-tRNA(Gln) in organisms which lack glutaminyl-tRNA synthetase. The reaction takes place in the presence of glutamine and ATP through an activated gamma-phospho-Glu-tRNA(Gln). The chain is Glutamyl-tRNA(Gln) amidotransferase subunit A from Chloroflexus aurantiacus (strain ATCC 29366 / DSM 635 / J-10-fl).